A 263-amino-acid polypeptide reads, in one-letter code: uncharacterized protein (263 aa).

Position 16-23 (16-23 (AKGGTGKT)) interacts with ATP.

The protein to M.jannaschii MJ0547 and MJ0169.

This is an uncharacterized protein from Methanocaldococcus jannaschii (strain ATCC 43067 / DSM 2661 / JAL-1 / JCM 10045 / NBRC 100440) (Methanococcus jannaschii).